The sequence spans 290 residues: Metallo-beta-lactamase L1 type 3 (290 aa).

Positions 1–21 (MRSTLLAFALAVALPAAHTSA) are cleaved as a signal peptide. Residues 22 to 33 (AEVPLPQLRAYT) constitute a propeptide that is removed on maturation. The Zn(2+) site is built by histidine 105, histidine 107, aspartate 109, histidine 110, and histidine 181. Aspartate 205 is a binding site for substrate. A disulfide bond links cysteine 239 and cysteine 267. A Zn(2+)-binding site is contributed by histidine 246.

The protein belongs to the metallo-beta-lactamase superfamily. Class-B beta-lactamase family. Homotetramer. It depends on Zn(2+) as a cofactor.

Its subcellular location is the periplasm. It catalyses the reaction a beta-lactam + H2O = a substituted beta-amino acid. With respect to regulation, inhibited by Hg(2+) or Cu(2+), and by chelating agents such as EDTA and O-phenanthroline. Reduced enzymatic activity in presence of cobalt, nickel, cadmium, and manganese. Functionally, confers resistance to the different beta-lactams antibiotics (penicillin, cephalosporin and carbapenem) via the hydrolysis of the beta-lactam ring. The sequence is that of Metallo-beta-lactamase L1 type 3 from Stenotrophomonas maltophilia (Pseudomonas maltophilia).